Here is a 176-residue protein sequence, read N- to C-terminus: Isopentenyl-diphosphate Delta-isomerase (176 aa).

Residues His24 and His30 each coordinate Mn(2+). The region spanning Leu28 to Cys160 is the Nudix hydrolase domain. The active site involves Cys65. Residue His67 participates in Mn(2+) binding. Residue Glu85 coordinates Mg(2+). 2 residues coordinate Mn(2+): Glu110 and Glu112. Residue Glu112 is part of the active site.

Belongs to the IPP isomerase type 1 family. Requires Mg(2+) as cofactor. Mn(2+) is required as a cofactor.

It localises to the cytoplasm. The enzyme catalyses isopentenyl diphosphate = dimethylallyl diphosphate. Its pathway is isoprenoid biosynthesis; dimethylallyl diphosphate biosynthesis; dimethylallyl diphosphate from isopentenyl diphosphate: step 1/1. Functionally, catalyzes the 1,3-allylic rearrangement of the homoallylic substrate isopentenyl (IPP) to its highly electrophilic allylic isomer, dimethylallyl diphosphate (DMAPP). This is Isopentenyl-diphosphate Delta-isomerase from Burkholderia multivorans (strain ATCC 17616 / 249).